The primary structure comprises 284 residues: Co-chaperone protein DjlA (284 aa).

The Periplasmic portion of the chain corresponds to 1 to 6 (MHIFGK). Residues 7–30 (ILGAFFGFLFGGPFGAIFGIFLGH) form a helical membrane-spanning segment. Residues 31-284 (QFDKARRLNQ…ELIRKEKGIK (254 aa)) are Cytoplasmic-facing. Residues 190–211 (QGGGFGGSQQQSHSGQQWQQPS) form a disordered region. Low complexity predominate over residues 197–211 (SQQQSHSGQQWQQPS). The J domain maps to 218 to 284 (DAYEVLGVSE…ELIRKEKGIK (67 aa)).

Homodimer.

The protein localises to the cell inner membrane. In terms of biological role, regulatory DnaK co-chaperone. Direct interaction between DnaK and DjlA is needed for the induction of the wcaABCDE operon, involved in the synthesis of a colanic acid polysaccharide capsule, possibly through activation of the RcsB/RcsC phosphotransfer signaling pathway. The colanic acid capsule may help the bacterium survive conditions outside the host. This is Co-chaperone protein DjlA from Vibrio cholerae serotype O1 (strain ATCC 39315 / El Tor Inaba N16961).